The sequence spans 30 residues: Cycloviolacin-O18 (30 aa).

A cross-link (cyclopeptide (Gly-Asn)) is located at residues 1 to 30 (GIPCGESCVYIPCTVTALAGCKCKSKVCYN). Intrachain disulfides connect Cys-4-Cys-21, Cys-8-Cys-23, and Cys-13-Cys-28.

In terms of processing, this is a cyclic peptide. In terms of tissue distribution, expressed in leaves, petals and petioles but not in roots and runners (at protein level).

Probably participates in a plant defense mechanism. The polypeptide is Cycloviolacin-O18 (Viola odorata (Sweet violet)).